The primary structure comprises 243 residues: ABC transporter arginine-binding protein 1 (243 aa).

Positions 1 to 19 (MKKLVLAALLASFTFGASA) are cleaved as a signal peptide.

Belongs to the bacterial solute-binding protein 3 family. In terms of assembly, the complex is composed of two ATP-binding proteins (ArtP), two transmembrane proteins (ArtM and ArtQ) and two solute-binding proteins (ArtJ and ArtI).

Its subcellular location is the periplasm. Part of the ABC transporter complex ArtPIQMJ involved in arginine transport. Binds L-arginine with high affinity. In Escherichia coli (strain K12), this protein is ABC transporter arginine-binding protein 1 (artJ).